A 62-amino-acid chain; its full sequence is Translational regulator CsrA (62 aa).

The protein belongs to the CsrA/RsmA family. In terms of assembly, homodimer; the beta-strands of each monomer intercalate to form a hydrophobic core, while the alpha-helices form wings that extend away from the core.

The protein resides in the cytoplasm. Functionally, a key translational regulator that binds mRNA to regulate translation initiation and/or mRNA stability. Mediates global changes in gene expression, shifting from rapid growth to stress survival by linking envelope stress, the stringent response and the catabolite repression systems. Usually binds in the 5'-UTR; binding at or near the Shine-Dalgarno sequence prevents ribosome-binding, repressing translation, binding elsewhere in the 5'-UTR can activate translation and/or stabilize the mRNA. Its function is antagonized by small RNA(s). This Idiomarina loihiensis (strain ATCC BAA-735 / DSM 15497 / L2-TR) protein is Translational regulator CsrA.